A 129-amino-acid chain; its full sequence is MVDFKVVLSDPKTGLSYKIDAAGAAAGALLGKKIGTEVDGAPFGMSGYKITITGGSDKTGTPARPDLPGNGRRGLLISDGFGFNATHNGERRRKSQRGNEIAADFVQVNAKITVYGEKPVTEIFAAAAE.

It belongs to the eukaryotic ribosomal protein eS6 family.

The polypeptide is Small ribosomal subunit protein eS6 (Methanocorpusculum labreanum (strain ATCC 43576 / DSM 4855 / Z)).